The chain runs to 581 residues: DNA primase (581 aa).

A CHC2-type zinc finger spans residues 40-64 (CPFHNEKTPSFTVNGEKQFYHCFGC). One can recognise a Toprim domain in the interval 259–341 (NRLLVVEGYM…GRQLRFMFLP (83 aa)). Residues Glu265, Asp309, and Asp311 each contribute to the Mg(2+) site.

It belongs to the DnaG primase family. In terms of assembly, monomer. Interacts with DnaB. The cofactor is Zn(2+). Mg(2+) serves as cofactor.

The enzyme catalyses ssDNA + n NTP = ssDNA/pppN(pN)n-1 hybrid + (n-1) diphosphate.. Functionally, RNA polymerase that catalyzes the synthesis of short RNA molecules used as primers for DNA polymerase during DNA replication. The polypeptide is DNA primase (Escherichia coli O6:H1 (strain CFT073 / ATCC 700928 / UPEC)).